The chain runs to 832 residues: MVEKTDIRVVRCGGSKINFRPPIISHDSRFVLCVSGDSVKVYSTRTEEWLHNLQGHNNQVTGIAFNPANQLQVYSCSADGTVKLWDFIDGILIKTFVIGYPLYSLYVSEKHEGVIFLIVSMVTDSNNESFQLVAVHLPKSAEQEVEAKELSTVASKISPNPSCTAFGRGGEFIAFSRHLQLNVYFFRKQKTYSFSLKATDKKAGKNAFTCVACHPTDDCIASGHEDGKIRLWRNFNHKKEYTYSTKHWHHDAVNHLCFTPEGSNLLSGGIESVLVQWQYGDMSKKEFLPRLGGSISHVSASADGQLFCTAHSDNKISIIESSFKVSGLIQGLVRGDAVSTDLMIDPRSKALVLNGKPGHLQFYSLLRDKHLYNLDIVQQEYIYEAGLDQFEVVKAVFDVKGSWLATVEERGHKTSDLEFFLKLWAFDETTQSFVLNTTVTEAHSERITSMCFSSSEETTMLVTTALDGQFKAWCQTADAQQAQNYWSCDFVGSYHNLKPKNCCFSADGSILAVSFQEVLTLWSPETWELLTTLCQPPGEIRDLCFGRLSCSKYLLSTTTKNLLCCWNLLTCALEWSTSVDVSRLQSDPLSENVAAFSFESKHTHLFVFKPSEPRPLFSQRYVCLERVDRAVFVPREEPFNSCDESCQWLNRSQLYFLTHNMDLLTFSSATEEDRMLSSSKRLVIDESVAVTPFYLLLGRHRKQQHKLNTETQEPADKPQHTQGSVTIKQLLHTPAHVLPAASVLCSMFVRSLLISNTGVREEMDSSEQEMDSEKEEEESEEEMEACDGQQELRAQGSVDEQKPKLSKAQERELKSLRKTDFSWMTSLIDSKP.

13 WD repeats span residues 4–43 (KTDI…KVYS), 47–86 (EEWL…KLWD), 90–134 (GILI…QLVA), 148–187 (KELS…YFFR), 196–233 (LKAT…RLWR), 239–278 (KEYT…VQWQ), 281–320 (DMSK…SIIE), 326–364 (SGLI…QFYS), 378–425 (QQEY…KLWA), 432–474 (SFVL…KAWC), 485–523 (YWSC…TLWS), 527–567 (WELL…CCWN), and 572–609 (ALEW…FVFK). Disordered regions lie at residues 704 to 723 (QHKL…HTQG) and 759 to 811 (VREE…AQER). Residues 764–785 (DSSEQEMDSEKEEEESEEEMEA) show a composition bias toward acidic residues. Residues 799–811 (DEQKPKLSKAQER) are compositionally biased toward basic and acidic residues.

In terms of assembly, component of the proposed t-UTP subcomplex of the ribosomal small subunit (SSU) processome. SSU processome is composed of more than 70 proteins and the RNA chaperone small nucleolar RNA (snoRNA) U3.

Its subcellular location is the nucleus. The protein localises to the nucleolus. Ribosome biogenesis factor. Part of the small subunit (SSU) processome, first precursor of the small eukaryotic ribosomal subunit. During the assembly of the SSU processome in the nucleolus, many ribosome biogenesis factors, an RNA chaperone and ribosomal proteins associate with the nascent pre-rRNA and work in concert to generate RNA folding, modifications, rearrangements and cleavage as well as targeted degradation of pre-ribosomal RNA by the RNA exosome. Involved in nucleolar processing of pre-18S ribosomal RNA. Required for optimal pre-ribosomal RNA transcription by RNA polymerase I. In Danio rerio (Zebrafish), this protein is WD repeat-containing protein 75 (wdr75).